The chain runs to 529 residues: Bifunctional purine biosynthesis protein PurH (529 aa).

In terms of domain architecture, MGS-like spans M1 to V148.

The protein belongs to the PurH family.

It carries out the reaction (6R)-10-formyltetrahydrofolate + 5-amino-1-(5-phospho-beta-D-ribosyl)imidazole-4-carboxamide = 5-formamido-1-(5-phospho-D-ribosyl)imidazole-4-carboxamide + (6S)-5,6,7,8-tetrahydrofolate. It catalyses the reaction IMP + H2O = 5-formamido-1-(5-phospho-D-ribosyl)imidazole-4-carboxamide. It participates in purine metabolism; IMP biosynthesis via de novo pathway; 5-formamido-1-(5-phospho-D-ribosyl)imidazole-4-carboxamide from 5-amino-1-(5-phospho-D-ribosyl)imidazole-4-carboxamide (10-formyl THF route): step 1/1. It functions in the pathway purine metabolism; IMP biosynthesis via de novo pathway; IMP from 5-formamido-1-(5-phospho-D-ribosyl)imidazole-4-carboxamide: step 1/1. In Salmonella arizonae (strain ATCC BAA-731 / CDC346-86 / RSK2980), this protein is Bifunctional purine biosynthesis protein PurH.